A 179-amino-acid polypeptide reads, in one-letter code: ATP synthase subunit delta (179 aa).

This sequence belongs to the ATPase delta chain family. F-type ATPases have 2 components, F(1) - the catalytic core - and F(0) - the membrane proton channel. F(1) has five subunits: alpha(3), beta(3), gamma(1), delta(1), epsilon(1). F(0) has three main subunits: a(1), b(2) and c(10-14). The alpha and beta chains form an alternating ring which encloses part of the gamma chain. F(1) is attached to F(0) by a central stalk formed by the gamma and epsilon chains, while a peripheral stalk is formed by the delta and b chains.

Its subcellular location is the cell inner membrane. In terms of biological role, f(1)F(0) ATP synthase produces ATP from ADP in the presence of a proton or sodium gradient. F-type ATPases consist of two structural domains, F(1) containing the extramembraneous catalytic core and F(0) containing the membrane proton channel, linked together by a central stalk and a peripheral stalk. During catalysis, ATP synthesis in the catalytic domain of F(1) is coupled via a rotary mechanism of the central stalk subunits to proton translocation. Functionally, this protein is part of the stalk that links CF(0) to CF(1). It either transmits conformational changes from CF(0) to CF(1) or is implicated in proton conduction. This chain is ATP synthase subunit delta, found in Koribacter versatilis (strain Ellin345).